A 389-amino-acid chain; its full sequence is Phosphoglycerate kinase (389 aa).

Substrate-binding positions include 21 to 23 (DLN), arginine 36, 59 to 62 (HLGR), arginine 112, and arginine 145. ATP-binding positions include lysine 196, glutamate 318, and 344–347 (GGDS).

Belongs to the phosphoglycerate kinase family. In terms of assembly, monomer.

The protein resides in the cytoplasm. It catalyses the reaction (2R)-3-phosphoglycerate + ATP = (2R)-3-phospho-glyceroyl phosphate + ADP. The protein operates within carbohydrate degradation; glycolysis; pyruvate from D-glyceraldehyde 3-phosphate: step 2/5. The chain is Phosphoglycerate kinase from Desulfovibrio desulfuricans (strain ATCC 27774 / DSM 6949 / MB).